We begin with the raw amino-acid sequence, 32 residues long: Ferredoxin (32 aa).

A 2Fe-2S ferredoxin-type domain is found at 3-32 (YKVRLLSEAEGIDVTIDCADDVYILDAAEE).

This sequence belongs to the 2Fe2S plant-type ferredoxin family. The cofactor is [2Fe-2S] cluster.

Its subcellular location is the plastid. It localises to the chloroplast. Ferredoxins are iron-sulfur proteins that transfer electrons in a wide variety of metabolic reactions. This Porphyridium purpureum (Red alga) protein is Ferredoxin.